The sequence spans 649 residues: Acetyl-coenzyme A synthetase (649 aa).

CoA contacts are provided by residues 190–193 (RGGR) and Thr-310. ATP-binding positions include 386-388 (GEP), 410-415 (DTWWQT), Asp-499, and Arg-514. Ser-522 serves as a coordination point for CoA. Arg-525 provides a ligand contact to ATP. The Mg(2+) site is built by Val-536, His-538, and Val-541. Arg-583 serves as a coordination point for CoA. Lys-608 carries the N6-acetyllysine modification.

The protein belongs to the ATP-dependent AMP-binding enzyme family. Mg(2+) serves as cofactor. In terms of processing, acetylated. Deacetylation by the SIR2-homolog deacetylase activates the enzyme.

It carries out the reaction acetate + ATP + CoA = acetyl-CoA + AMP + diphosphate. In terms of biological role, catalyzes the conversion of acetate into acetyl-CoA (AcCoA), an essential intermediate at the junction of anabolic and catabolic pathways. AcsA undergoes a two-step reaction. In the first half reaction, AcsA combines acetate with ATP to form acetyl-adenylate (AcAMP) intermediate. In the second half reaction, it can then transfer the acetyl group from AcAMP to the sulfhydryl group of CoA, forming the product AcCoA. The chain is Acetyl-coenzyme A synthetase from Methylorubrum extorquens (strain PA1) (Methylobacterium extorquens).